The chain runs to 371 residues: Probable protein phosphatase 2C 11 (371 aa).

Residues 29–49 (FFFFLFNSQTISSFIIFYLFL) traverse the membrane as a helical segment. The disordered stretch occupies residues 67 to 95 (PPLSVAPLRGDANSPPPESSSSPATKSSL). Residues 85–94 (SSSSPATKSS) show a composition bias toward low complexity. One can recognise a PPM-type phosphatase domain in the interval 123 to 368 (SYGYSSLKGK…DNITCIVVRF (246 aa)). Positions 159, 160, 320, and 359 each coordinate Mn(2+).

Belongs to the PP2C family. It depends on Mg(2+) as a cofactor. Mn(2+) is required as a cofactor.

Its subcellular location is the membrane. It catalyses the reaction O-phospho-L-seryl-[protein] + H2O = L-seryl-[protein] + phosphate. It carries out the reaction O-phospho-L-threonyl-[protein] + H2O = L-threonyl-[protein] + phosphate. The sequence is that of Probable protein phosphatase 2C 11 from Arabidopsis thaliana (Mouse-ear cress).